The following is a 450-amino-acid chain: Exodeoxyribonuclease 7 large subunit (450 aa).

The protein belongs to the XseA family. Heterooligomer composed of large and small subunits.

The protein localises to the cytoplasm. It carries out the reaction Exonucleolytic cleavage in either 5'- to 3'- or 3'- to 5'-direction to yield nucleoside 5'-phosphates.. Its function is as follows. Bidirectionally degrades single-stranded DNA into large acid-insoluble oligonucleotides, which are then degraded further into small acid-soluble oligonucleotides. This is Exodeoxyribonuclease 7 large subunit from Shewanella frigidimarina (strain NCIMB 400).